We begin with the raw amino-acid sequence, 282 residues long: Cuticle collagen 8 (282 aa).

An N-terminal signal peptide occupies residues 1–24; sequence MLVCVFVALYTMMGLLTDIKQLQS. The segment at 86–282 is disordered; it reads GPKSEGCPAG…CPCPGRSYKA (197 aa). Triple-helical region regions lie at residues 95–124 and 141–269; these read GPPG…PGVI and GRPG…PGPD. Positions 170-180 are enriched in gly residues; the sequence is TGGQGGPGEQG. Pro residues predominate over residues 214–224; that stretch reads PPGPRGPPGPE. Positions 225–234 are enriched in gly residues; sequence GNPGGAGEDG. Low complexity predominate over residues 235-244; that stretch reads NQGPVGHPGV.

The protein belongs to the cuticular collagen family. As to quaternary structure, collagen polypeptide chains are complexed within the cuticle by disulfide bonds and other types of covalent cross-links.

Functionally, nematode cuticles are composed largely of collagen-like proteins. The cuticle functions both as an exoskeleton and as a barrier to protect the worm from its environment. The protein is Cuticle collagen 8 (col-8) of Caenorhabditis elegans.